The primary structure comprises 435 residues: Serine/threonine-protein kinase 40 (435 aa).

One can recognise a Protein kinase domain in the interval 35-332 (FVLGPRLGNS…DVLEALSAII (298 aa)). ATP contacts are provided by residues 41–49 (LGNSPVPSI) and Lys-66. Catalysis depends on Asp-197, which acts as the Proton acceptor.

This sequence belongs to the protein kinase superfamily. CAMK Ser/Thr protein kinase family.

It localises to the nucleus. The protein resides in the cytoplasm. It catalyses the reaction L-seryl-[protein] + ATP = O-phospho-L-seryl-[protein] + ADP + H(+). The enzyme catalyses L-threonyl-[protein] + ATP = O-phospho-L-threonyl-[protein] + ADP + H(+). Functionally, may be a negative regulator of NF-kappa-B and p53-mediated gene transcription. This Mus musculus (Mouse) protein is Serine/threonine-protein kinase 40 (Stk40).